Reading from the N-terminus, the 503-residue chain is Nuclear respiratory factor 1 (503 aa).

The interval 1-78 (MEEHGVTQTE…AHLAAAGPVG (78 aa)) is dimerization. Residues 36 to 57 (SMLSADEDSPSSPEDTSYDDSD) form a disordered region. Serine 39, serine 44, serine 46, serine 47, and serine 52 each carry phosphoserine; by CK2. The short motif at 88 to 116 (GKKRKRPHVFESNPSIRKRQQTRLLRKLR) is the Nuclear localization signal element. The DNA-binding element occupies 109 to 305 (TRLLRKLRAT…SIAHLVPSQT (197 aa)). Lysine 139 participates in a covalent cross-link: Glycyl lysine isopeptide (Lys-Gly) (interchain with G-Cter in SUMO2). A required for transcriptional activation region spans residues 301–476 (VPSQTVVQTF…AQGNGPVQVA (176 aa)).

The protein belongs to the NRF1/Ewg family. As to quaternary structure, homodimer. Binds DNA as a dimer. Interacts with PPRC1. Phosphorylation enhances DNA binding. In terms of tissue distribution, widely expressed in embryonic, fetal, and adult tissues.

It is found in the nucleus. Functionally, transcription factor that activates the expression of the EIF2S1 (EIF2-alpha) gene. Links the transcriptional modulation of key metabolic genes to cellular growth and development. Implicated in the control of nuclear genes required for respiration, heme biosynthesis, and mitochondrial DNA transcription and replication. This Mus musculus (Mouse) protein is Nuclear respiratory factor 1 (Nrf1).